The primary structure comprises 275 residues: NH(3)-dependent NAD(+) synthetase (275 aa).

Residue 50 to 57 participates in ATP binding; it reads GISGGVDS. Position 56 (Asp-56) interacts with Mg(2+). Deamido-NAD(+) is bound at residue Arg-147. Thr-167 lines the ATP pocket. Glu-172 contacts Mg(2+). Deamido-NAD(+)-binding residues include Lys-180 and Asp-187. ATP contacts are provided by Lys-196 and Thr-218. 267–268 is a binding site for deamido-NAD(+); sequence HK.

The protein belongs to the NAD synthetase family. As to quaternary structure, homodimer.

It catalyses the reaction deamido-NAD(+) + NH4(+) + ATP = AMP + diphosphate + NAD(+) + H(+). It participates in cofactor biosynthesis; NAD(+) biosynthesis; NAD(+) from deamido-NAD(+) (ammonia route): step 1/1. Functionally, catalyzes the ATP-dependent amidation of deamido-NAD to form NAD. Uses ammonia as a nitrogen source. This Pseudomonas aeruginosa (strain LESB58) protein is NH(3)-dependent NAD(+) synthetase.